The sequence spans 173 residues: NADH-ubiquinone oxidoreductase chain 6 (173 aa).

Transmembrane regions (helical) follow at residues 1 to 21 (MTYF…AVAS), 27 to 47 (YGVV…MSLG), 48 to 68 (MSFV…VVFV), 87 to 107 (VVGY…VGGL), and 139 to 159 (CGVG…FVVL).

This sequence belongs to the complex I subunit 6 family.

It localises to the mitochondrion membrane. The catalysed reaction is a ubiquinone + NADH + 5 H(+)(in) = a ubiquinol + NAD(+) + 4 H(+)(out). Its function is as follows. Core subunit of the mitochondrial membrane respiratory chain NADH dehydrogenase (Complex I) that is believed to belong to the minimal assembly required for catalysis. Complex I functions in the transfer of electrons from NADH to the respiratory chain. The immediate electron acceptor for the enzyme is believed to be ubiquinone. The protein is NADH-ubiquinone oxidoreductase chain 6 (MT-ND6) of Synthliboramphus antiquus (Ancient murrelet).